A 122-amino-acid polypeptide reads, in one-letter code: NADH-quinone oxidoreductase subunit A (122 aa).

Helical transmembrane passes span 10–30, 66–86, and 91–111; these read MIVGIFLLLGILLPVVALTLG, IFALLFVIFDVETLFLYPWAV, and LGLFALIEMLIFVAMLLIGLA.

It belongs to the complex I subunit 3 family. NDH-1 is composed of 14 different subunits. Subunits NuoA, H, J, K, L, M, N constitute the membrane sector of the complex.

The protein localises to the cell membrane. It carries out the reaction a quinone + NADH + 5 H(+)(in) = a quinol + NAD(+) + 4 H(+)(out). Its function is as follows. NDH-1 shuttles electrons from NADH, via FMN and iron-sulfur (Fe-S) centers, to quinones in the respiratory chain. The immediate electron acceptor for the enzyme in this species is believed to be a menaquinone. Couples the redox reaction to proton translocation (for every two electrons transferred, four hydrogen ions are translocated across the cytoplasmic membrane), and thus conserves the redox energy in a proton gradient. The chain is NADH-quinone oxidoreductase subunit A from Bacillus cytotoxicus (strain DSM 22905 / CIP 110041 / 391-98 / NVH 391-98).